Consider the following 344-residue polypeptide: Aspartate carbamoyltransferase catalytic subunit (344 aa).

Positions 1 to 30 (MPESPPLPKRSPLMTSSTTRPASDYPPGGD) are disordered. Residues Arg-88 and Thr-89 each coordinate carbamoyl phosphate. Lys-116 is a binding site for L-aspartate. Carbamoyl phosphate contacts are provided by Arg-138, His-166, and Gln-169. Arg-199 and Arg-253 together coordinate L-aspartate. Residues Gly-294 and Pro-295 each contribute to the carbamoyl phosphate site.

Belongs to the aspartate/ornithine carbamoyltransferase superfamily. ATCase family. As to quaternary structure, heterododecamer (2C3:3R2) of six catalytic PyrB chains organized as two trimers (C3), and six regulatory PyrI chains organized as three dimers (R2).

It catalyses the reaction carbamoyl phosphate + L-aspartate = N-carbamoyl-L-aspartate + phosphate + H(+). Its pathway is pyrimidine metabolism; UMP biosynthesis via de novo pathway; (S)-dihydroorotate from bicarbonate: step 2/3. In terms of biological role, catalyzes the condensation of carbamoyl phosphate and aspartate to form carbamoyl aspartate and inorganic phosphate, the committed step in the de novo pyrimidine nucleotide biosynthesis pathway. This is Aspartate carbamoyltransferase catalytic subunit from Sphingopyxis alaskensis (strain DSM 13593 / LMG 18877 / RB2256) (Sphingomonas alaskensis).